The chain runs to 283 residues: uncharacterized protein (283 aa).

Residues 208-232 show a composition bias toward basic and acidic residues; it reads SMENKVNETQNSKEDEKKKNDGDGK. The segment at 208–237 is disordered; that stretch reads SMENKVNETQNSKEDEKKKNDGDGKRSKKK.

This is an uncharacterized protein from Saccharomyces cerevisiae (strain ATCC 204508 / S288c) (Baker's yeast).